Here is a 388-residue protein sequence, read N- to C-terminus: MAQRDYYDVLGVDKNASESEISKAYRKLAKKYHPDLNHEPGAEEKYKEVNEAYEVLHDKQKRAQYDQFGQAGVNGQGGFGGQGFGGFGGQGGYSSQGFGDFGDIFGDIFGSAFGGGRSRVDPTAPQKGQDLDYTMTIDFMDAIKGKKTDITYTRSEVCPTCDGSGAEKGTHPITCDKCHGSGVMTVTRQTPLGVIQQQTTCDKCGGRGTIIEHPCQTCHGQGTVDKKQTLQVTVPAGIDNGQQIRLSGQGEAGKNGGPYGDLYIVFRVKPSKEFRRNGTTIYTEAPISFAQAALGDKIRVNTVHGPVDLTIPAGTQPNTNFKLRGQGVPKINGTGNGDQEVTVKVVIPKKINDKQKEALVDYVKAGGGNISPQEKNFFERLKDKLNGE.

One can recognise a J domain in the interval 5 to 69 (DYYDVLGVDK…QKRAQYDQFG (65 aa)). Residues 145–227 (GKKTDITYTR…CHGQGTVDKK (83 aa)) form a CR-type zinc finger. Zn(2+) contacts are provided by cysteine 158, cysteine 161, cysteine 175, cysteine 178, cysteine 201, cysteine 204, cysteine 215, and cysteine 218. CXXCXGXG motif repeat units lie at residues 158–165 (CPTCDGSG), 175–182 (CDKCHGSG), 201–208 (CDKCGGRG), and 215–222 (CQTCHGQG).

This sequence belongs to the DnaJ family. Homodimer. Requires Zn(2+) as cofactor.

The protein localises to the cytoplasm. Its function is as follows. Participates actively in the response to hyperosmotic and heat shock by preventing the aggregation of stress-denatured proteins and by disaggregating proteins, also in an autonomous, DnaK-independent fashion. Unfolded proteins bind initially to DnaJ; upon interaction with the DnaJ-bound protein, DnaK hydrolyzes its bound ATP, resulting in the formation of a stable complex. GrpE releases ADP from DnaK; ATP binding to DnaK triggers the release of the substrate protein, thus completing the reaction cycle. Several rounds of ATP-dependent interactions between DnaJ, DnaK and GrpE are required for fully efficient folding. Also involved, together with DnaK and GrpE, in the DNA replication of plasmids through activation of initiation proteins. The polypeptide is Chaperone protein DnaJ (Lactobacillus johnsonii (strain CNCM I-12250 / La1 / NCC 533)).